The following is a 373-amino-acid chain: Chaperone protein DnaJ (373 aa).

One can recognise a J domain in the interval 4 to 68; the sequence is NYYQILGVSK…QTRAAYDRLG (65 aa). The CR-type zinc finger occupies 136–214; it reads GIEKNISFSS…CHGMGRYHKQ (79 aa). Positions 149, 152, 166, 169, 188, 191, 202, and 205 each coordinate Zn(2+). CXXCXGXG motif repeat units lie at residues 149-156, 166-173, 188-195, and 202-209; these read CDTCHGSG, CDACSGVG, CHKCQGNG, and CKKCHGMG.

It belongs to the DnaJ family. In terms of assembly, homodimer. It depends on Zn(2+) as a cofactor.

It is found in the cytoplasm. Functionally, participates actively in the response to hyperosmotic and heat shock by preventing the aggregation of stress-denatured proteins and by disaggregating proteins, also in an autonomous, DnaK-independent fashion. Unfolded proteins bind initially to DnaJ; upon interaction with the DnaJ-bound protein, DnaK hydrolyzes its bound ATP, resulting in the formation of a stable complex. GrpE releases ADP from DnaK; ATP binding to DnaK triggers the release of the substrate protein, thus completing the reaction cycle. Several rounds of ATP-dependent interactions between DnaJ, DnaK and GrpE are required for fully efficient folding. Also involved, together with DnaK and GrpE, in the DNA replication of plasmids through activation of initiation proteins. The sequence is that of Chaperone protein DnaJ from Rickettsia peacockii (strain Rustic).